A 135-amino-acid chain; its full sequence is Large ribosomal subunit protein uL16c (135 aa).

Basic residues predominate over residues 1–17 (MLSPKRTKFRKQHRNRM). The tract at residues 1–22 (MLSPKRTKFRKQHRNRMNGKAS) is disordered.

This sequence belongs to the universal ribosomal protein uL16 family. In terms of assembly, part of the 50S ribosomal subunit.

The protein localises to the plastid. It is found in the chloroplast. The sequence is that of Large ribosomal subunit protein uL16c from Gracilaria tenuistipitata (Red alga).